The following is a 356-amino-acid chain: UDP-N-acetylglucosamine--N-acetylmuramyl-(pentapeptide) pyrophosphoryl-undecaprenol N-acetylglucosamine transferase (356 aa).

UDP-N-acetyl-alpha-D-glucosamine contacts are provided by residues 10–12 (TAG), asparagine 123, arginine 159, serine 193, isoleucine 240, and glutamine 284.

Belongs to the glycosyltransferase 28 family. MurG subfamily.

The protein resides in the cell membrane. The enzyme catalyses di-trans,octa-cis-undecaprenyl diphospho-N-acetyl-alpha-D-muramoyl-L-alanyl-D-glutamyl-meso-2,6-diaminopimeloyl-D-alanyl-D-alanine + UDP-N-acetyl-alpha-D-glucosamine = di-trans,octa-cis-undecaprenyl diphospho-[N-acetyl-alpha-D-glucosaminyl-(1-&gt;4)]-N-acetyl-alpha-D-muramoyl-L-alanyl-D-glutamyl-meso-2,6-diaminopimeloyl-D-alanyl-D-alanine + UDP + H(+). It participates in cell wall biogenesis; peptidoglycan biosynthesis. Functionally, cell wall formation. Catalyzes the transfer of a GlcNAc subunit on undecaprenyl-pyrophosphoryl-MurNAc-pentapeptide (lipid intermediate I) to form undecaprenyl-pyrophosphoryl-MurNAc-(pentapeptide)GlcNAc (lipid intermediate II). The chain is UDP-N-acetylglucosamine--N-acetylmuramyl-(pentapeptide) pyrophosphoryl-undecaprenol N-acetylglucosamine transferase from Corynebacterium glutamicum (strain R).